The following is a 97-amino-acid chain: Large ribosomal subunit protein bL27 (97 aa).

A propeptide spanning residues 1 to 12 (MLKMNLANLQLF) is cleaved from the precursor. The tract at residues 14 to 37 (HKKGGGSTSNGRDSQAKRLGAKAA) is disordered.

The protein belongs to the bacterial ribosomal protein bL27 family. The N-terminus is cleaved by ribosomal processing cysteine protease Prp.

The sequence is that of Large ribosomal subunit protein bL27 from Streptococcus agalactiae serotype III (strain NEM316).